Reading from the N-terminus, the 337-residue chain is Glyceraldehyde-3-phosphate dehydrogenase (337 aa).

NAD(+) contacts are provided by residues 13–14, Asp35, and Lys80; that span reads RI. Residues 151–153, Thr182, 211–212, and Arg234 each bind D-glyceraldehyde 3-phosphate; these read SCT and TG. The active-site Nucleophile is the Cys152. Asn316 contributes to the NAD(+) binding site.

It belongs to the glyceraldehyde-3-phosphate dehydrogenase family. As to quaternary structure, homotetramer.

The protein resides in the cytoplasm. It catalyses the reaction D-glyceraldehyde 3-phosphate + phosphate + NAD(+) = (2R)-3-phospho-glyceroyl phosphate + NADH + H(+). Its pathway is carbohydrate degradation; glycolysis; pyruvate from D-glyceraldehyde 3-phosphate: step 1/5. The chain is Glyceraldehyde-3-phosphate dehydrogenase (GAPD) from Mycosarcoma maydis (Corn smut fungus).